A 293-amino-acid chain; its full sequence is tRNA pseudouridine synthase A (293 aa).

Asp67 functions as the Nucleophile in the catalytic mechanism. A substrate-binding site is contributed by Tyr125.

Belongs to the tRNA pseudouridine synthase TruA family. As to quaternary structure, homodimer.

It catalyses the reaction uridine(38/39/40) in tRNA = pseudouridine(38/39/40) in tRNA. Functionally, formation of pseudouridine at positions 38, 39 and 40 in the anticodon stem and loop of transfer RNAs. The sequence is that of tRNA pseudouridine synthase A from Synechococcus sp. (strain CC9605).